A 210-amino-acid polypeptide reads, in one-letter code: Protoporphyrinogen IX oxidase (210 aa).

5 helical membrane passes run 22-42 (WFKAFHLIGIVVWFAGLFYLV), 74-94 (YNIITTPGMVVTVAMAIGLIF), 103-123 (GWLHIKLTFVALLLLYHFYCG), 141-161 (FRALNEAPTILLVVIVLLAVF), and 165-185 (LPLDATTWLIVALVIAMAASI). His27 provides a ligand contact to heme. Lys108 is a binding site for heme.

Belongs to the HemJ family. In terms of assembly, homodimer. Can also form higher oligomers, most probably tetramers. Interacts with Sll1106, however it is unlikely that Sll1106 is required for PPO function. Heme b serves as cofactor.

It localises to the cell membrane. The catalysed reaction is protoporphyrinogen IX + 3 A = protoporphyrin IX + 3 AH2. The protein operates within porphyrin-containing compound metabolism; protoporphyrin-IX biosynthesis; protoporphyrin-IX from protoporphyrinogen-IX: step 1/1. In terms of biological role, catalyzes the oxidation of protoporphyrinogen IX to protoporphyrin IX. Is involved in the biosynthesis of tetrapyrrole molecules like heme and chlorophyll. Does not use oxygen or artificial electron acceptors such as menadione or benzoquinone. Is functionally coupled with coproporphyrinogen III oxidase (CPO). Is essential for growth. This is Protoporphyrinogen IX oxidase from Synechocystis sp. (strain ATCC 27184 / PCC 6803 / Kazusa).